The primary structure comprises 399 residues: 3-phosphoshikimate 1-carboxyvinyltransferase (399 aa).

Residues Lys-19, Ser-20, and Arg-24 each contribute to the 3-phosphoshikimate site. Position 19 (Lys-19) interacts with phosphoenolpyruvate. Residues Gly-83 and Arg-111 each contribute to the phosphoenolpyruvate site. 6 residues coordinate 3-phosphoshikimate: Ser-152, Ser-153, Gln-154, Asp-288, Gln-310, and Lys-314. A phosphoenolpyruvate-binding site is contributed by Gln-154. Residue Asp-288 is the Proton acceptor of the active site. The phosphoenolpyruvate site is built by Arg-318, Arg-359, and Lys-385.

It belongs to the EPSP synthase family. Monomer.

It localises to the cytoplasm. The catalysed reaction is 3-phosphoshikimate + phosphoenolpyruvate = 5-O-(1-carboxyvinyl)-3-phosphoshikimate + phosphate. Its pathway is metabolic intermediate biosynthesis; chorismate biosynthesis. Catalyzes the transfer of the enolpyruvyl moiety of phosphoenolpyruvate (PEP) to the 5-hydroxyl of shikimate-3-phosphate (S3P) to produce enolpyruvyl shikimate-3-phosphate and inorganic phosphate. This is 3-phosphoshikimate 1-carboxyvinyltransferase from Thermococcus kodakarensis (strain ATCC BAA-918 / JCM 12380 / KOD1) (Pyrococcus kodakaraensis (strain KOD1)).